Here is a 259-residue protein sequence, read N- to C-terminus: MLFLLSPAKSLDYDTPLPPGLAHTLPPFIHESTQLIEVLREKSPQELASLMGISDALAGLNAARYAAWSPRFTAANARQALFAFNGDVYEGLDARSLDGDGLRWAQDHVAILSGLYGVLRPLDRMQPYRLEMGTRLATGAGANLYRFWGKRIAEHLNQRLAADATPVVVNLASQEYFKSVDTAALKARVIECVFEDWKGGRYKIISFHAKRARGLMARYAIQHRVVAPRQLEGFDLEGYAFDASASAQDRLVFRRKDAG.

The protein belongs to the UPF0246 family.

This Paracidovorax citrulli (strain AAC00-1) (Acidovorax citrulli) protein is UPF0246 protein Aave_1172.